We begin with the raw amino-acid sequence, 360 residues long: GDSL esterase/lipase At2g31540 (360 aa).

Residues 1–23 form the signal peptide; it reads MSTSKAITLTLFIATTLLAPCNA. The active-site Nucleophile is the Ser42. 2 N-linked (GlcNAc...) asparagine glycosylation sites follow: Asn104 and Asn326. Residues Asp334 and His337 contribute to the active site.

The protein belongs to the 'GDSL' lipolytic enzyme family.

It localises to the secreted. The polypeptide is GDSL esterase/lipase At2g31540 (Arabidopsis thaliana (Mouse-ear cress)).